The following is a 66-amino-acid chain: Large ribosomal subunit protein bL31 (66 aa).

Zn(2+) contacts are provided by C16, C18, C36, and C39.

This sequence belongs to the bacterial ribosomal protein bL31 family. Type A subfamily. In terms of assembly, part of the 50S ribosomal subunit. The cofactor is Zn(2+).

In terms of biological role, binds the 23S rRNA. This chain is Large ribosomal subunit protein bL31, found in Geobacillus sp. (strain WCH70).